Reading from the N-terminus, the 146-residue chain is Large ribosomal subunit protein uL22 (146 aa).

The protein belongs to the universal ribosomal protein uL22 family. As to quaternary structure, part of the 50S ribosomal subunit.

This protein binds specifically to 23S rRNA; its binding is stimulated by other ribosomal proteins, e.g. L4, L17, and L20. It is important during the early stages of 50S assembly. It makes multiple contacts with different domains of the 23S rRNA in the assembled 50S subunit and ribosome. Functionally, the globular domain of the protein is located near the polypeptide exit tunnel on the outside of the subunit, while an extended beta-hairpin is found that lines the wall of the exit tunnel in the center of the 70S ribosome. The chain is Large ribosomal subunit protein uL22 from Nocardioides sp. (strain ATCC BAA-499 / JS614).